We begin with the raw amino-acid sequence, 397 residues long: Succinate--CoA ligase [ADP-forming] subunit beta (397 aa).

Residues 9 to 254 (KALLKSFGAP…ETEQDAKELE (246 aa)) form the ATP-grasp domain. ATP is bound by residues Lys46, 53–55 (GRG), Glu109, Ala112, and Glu117. Residues Asn209 and Asp223 each contribute to the Mg(2+) site. Residues Asn274 and 331–333 (GIM) each bind substrate.

This sequence belongs to the succinate/malate CoA ligase beta subunit family. Heterotetramer of two alpha and two beta subunits. Mg(2+) is required as a cofactor.

It carries out the reaction succinate + ATP + CoA = succinyl-CoA + ADP + phosphate. The enzyme catalyses GTP + succinate + CoA = succinyl-CoA + GDP + phosphate. It functions in the pathway carbohydrate metabolism; tricarboxylic acid cycle; succinate from succinyl-CoA (ligase route): step 1/1. Functionally, succinyl-CoA synthetase functions in the citric acid cycle (TCA), coupling the hydrolysis of succinyl-CoA to the synthesis of either ATP or GTP and thus represents the only step of substrate-level phosphorylation in the TCA. The beta subunit provides nucleotide specificity of the enzyme and binds the substrate succinate, while the binding sites for coenzyme A and phosphate are found in the alpha subunit. The polypeptide is Succinate--CoA ligase [ADP-forming] subunit beta (Hyphomonas neptunium (strain ATCC 15444)).